Here is a 282-residue protein sequence, read N- to C-terminus: Pantothenate synthetase (282 aa).

30-37 (MGNLHQGH) provides a ligand contact to ATP. Catalysis depends on H37, which acts as the Proton donor. Residue Q61 coordinates (R)-pantoate. Q61 provides a ligand contact to beta-alanine. 149-152 (GKKD) contacts ATP. Q155 is a (R)-pantoate binding site. Residues I178 and 186–189 (MSSR) contribute to the ATP site.

The protein belongs to the pantothenate synthetase family. As to quaternary structure, homodimer.

Its subcellular location is the cytoplasm. It carries out the reaction (R)-pantoate + beta-alanine + ATP = (R)-pantothenate + AMP + diphosphate + H(+). It participates in cofactor biosynthesis; (R)-pantothenate biosynthesis; (R)-pantothenate from (R)-pantoate and beta-alanine: step 1/1. In terms of biological role, catalyzes the condensation of pantoate with beta-alanine in an ATP-dependent reaction via a pantoyl-adenylate intermediate. This is Pantothenate synthetase from Shewanella loihica (strain ATCC BAA-1088 / PV-4).